We begin with the raw amino-acid sequence, 299 residues long: DNA-binding transcriptional activator HetR (299 aa).

Positions 1 to 98 (MSNDIDLIKR…GKLLKTLGSQ (98 aa)) are DNA-binding domain. DNA-binding positions include 34 to 40 (RHGAFLD) and 60 to 76 (NLRMTGHLHHLEPKRVK). A flap domain region spans residues 99 to 216 (EPRYLIQFPY…FYALTRPFYA (118 aa)). Ser-152 is a catalytic residue. DNA is bound at residue 179–181 (SEA). A hood domain region spans residues 217–299 (PADDQERTYI…LQMVFGRKED (83 aa)).

It belongs to the peptidase S48 family. As to quaternary structure, upon expression in E.coli most protein is monomeric, although varying amounts of homodimer can be seen. Homodimer; disulfide-linked. Homodimer. Binds the 6 residue C-terminal peptide of PatS; one peptide binds to each subunit. In bacterial two-hybrid assays interacts robustly with itself, Alr2902 and Alr3234 and more weakly with Als1930. Probably autodegrades.

With respect to regulation, protease activity is inhibited by PMSF, suggesting this is a serine protease. Its function is as follows. Controls heterocyst differentiation. Dimerization is required for DNA-binding. Has both a protease and a DNA-binding activity. Functionally, controls heterocyst differentiation; increased expression leads to more heterocysts than usual. Has protease activity. Binds the promoter regions of hetR, hepA and patS and is required for their expression. Dimerization is required for DNA-binding, DNA-binding is inhibited by the PatS6 peptide. Binds the inverted repeat 5'-GTAGGCGAGGGGTCTAACCCCTCATTACC-3' found in the hetP promoter, required for expression of hetP. This is DNA-binding transcriptional activator HetR from Nostoc sp. (strain PCC 7120 / SAG 25.82 / UTEX 2576).